A 117-amino-acid polypeptide reads, in one-letter code: MEIKPSRIFSTITIFFLCLLLAHVTSKASSSSLCNGSVAECSSMVETEEMSVIMESWSSQRLTEEQAHKLSYGALRRNQPACDGGKRGESYSTQCLPPPSNPYSRGCSKHYRCGRDS.

Residues 1 to 26 (MEIKPSRIFSTITIFFLCLLLAHVTS) form the signal peptide. Residues 27–64 (KASSSSLCNGSVAECSSMVETEEMSVIMESWSSQRLTE) constitute a propeptide, removed in mature form. An N-linked (GlcNAc...) asparagine glycan is attached at Asn35. The disordered stretch occupies residues 77–107 (RNQPACDGGKRGESYSTQCLPPPSNPYSRGC). 2 cysteine pairs are disulfide-bonded: Cys82–Cys95 and Cys107–Cys113.

The protein belongs to the plant rapid alkalinization factor (RALF) family. Proteolytically cleaved, probably by S1P, a subtilisin-like serine protease (subtilase).

It localises to the secreted. Functionally, cell signaling peptide that may regulate plant stress, growth, and development. Mediates a rapid alkalinization of extracellular space by mediating a transient increase in the cytoplasmic Ca(2+) concentration leading to a calcium-dependent signaling events through a cell surface receptor and a concomitant activation of some intracellular mitogen-activated protein kinases. The chain is Protein RALF-like 32 (RALFL32) from Arabidopsis thaliana (Mouse-ear cress).